Consider the following 146-residue polypeptide: 3-hydroxyacyl-[acyl-carrier-protein] dehydratase FabZ (146 aa).

The active site involves H49.

This sequence belongs to the thioester dehydratase family. FabZ subfamily.

The protein localises to the cytoplasm. It carries out the reaction a (3R)-hydroxyacyl-[ACP] = a (2E)-enoyl-[ACP] + H2O. Involved in unsaturated fatty acids biosynthesis. Catalyzes the dehydration of short chain beta-hydroxyacyl-ACPs and long chain saturated and unsaturated beta-hydroxyacyl-ACPs. This is 3-hydroxyacyl-[acyl-carrier-protein] dehydratase FabZ from Pseudomonas putida (strain ATCC 700007 / DSM 6899 / JCM 31910 / BCRC 17059 / LMG 24140 / F1).